A 228-amino-acid chain; its full sequence is Prolactin-2A1 (228 aa).

The signal sequence occupies residues 1-29 (MQLSITHPCCWTLRLLLVSNLLLWENVAL). 2 cysteine pairs are disulfide-bonded: Cys-87/Cys-203 and Cys-220/Cys-228.

The protein belongs to the somatotropin/prolactin family. Expressed specifically in the placenta. Highly expressed in invasive trophoblast cells lining the central placental vessel.

It is found in the secreted. This chain is Prolactin-2A1 (Prl2a1), found in Rattus norvegicus (Rat).